The primary structure comprises 150 residues: Large ribosomal subunit protein bL9 (150 aa).

Belongs to the bacterial ribosomal protein bL9 family.

Functionally, binds to the 23S rRNA. This is Large ribosomal subunit protein bL9 from Paraburkholderia xenovorans (strain LB400).